The primary structure comprises 537 residues: uncharacterized protein (537 aa).

Residues 10–56 (HHDVEPQNVEEEPPLTGQTIVTEDKLETSAKDKKHESPSMSEDEEGS) are disordered. Over residues 31 to 46 (TEDKLETSAKDKKHES) the composition is skewed to basic and acidic residues. Transmembrane regions (helical) follow at residues 90 to 110 (FVAT…TACI), 133 to 153 (LFIV…DIFG), 156 to 176 (WVYV…ALAY), 180 to 200 (MMAI…ANVA), 213 to 233 (GFGI…GSPI), 243 to 263 (WFYW…VLCP), 313 to 333 (PIIM…FLYL), 348 to 368 (YMGA…VVML), 393 to 413 (FLIS…FAFT), 422 to 442 (SPLI…LAMI), 457 to 477 (IAAF…LGII), and 492 to 512 (AFIS…GHLI).

Belongs to the major facilitator superfamily. CAR1 family.

The protein localises to the endoplasmic reticulum. It localises to the golgi apparatus. Its subcellular location is the membrane. This is an uncharacterized protein from Schizosaccharomyces pombe (strain 972 / ATCC 24843) (Fission yeast).